The primary structure comprises 281 residues: Bis(5'-nucleosyl)-tetraphosphatase, symmetrical (281 aa).

Belongs to the Ap4A hydrolase family.

It carries out the reaction P(1),P(4)-bis(5'-adenosyl) tetraphosphate + H2O = 2 ADP + 2 H(+). Functionally, hydrolyzes diadenosine 5',5'''-P1,P4-tetraphosphate to yield ADP. This chain is Bis(5'-nucleosyl)-tetraphosphatase, symmetrical, found in Pectobacterium carotovorum subsp. carotovorum (strain PC1).